The following is a 296-amino-acid chain: GTP-binding protein GEM (296 aa).

2 disordered regions span residues 1 to 20 (MTLNNVTMRQGTVGMQPQQQ) and 37 to 68 (PHQYSHRNRHSATPEDHCRRSWSSDSTDSVIS). Residues 57 to 68 (SWSSDSTDSVIS) show a composition bias toward low complexity. GTP-binding positions include 82–89 (GEQGVGKS) and 191–194 (NKSD). The calmodulin-binding stretch occupies residues 266–285 (ARRFWGKIVAKNNKNMAFKL).

It belongs to the small GTPase superfamily. RGK family. Interacts with calmodulin in a Ca(2+)-dependent manner. Binds ROCK1. Post-translationally, phosphorylated on tyrosine residues.

It localises to the cell membrane. Functionally, could be a regulatory protein, possibly participating in receptor-mediated signal transduction at the plasma membrane. Has guanine nucleotide-binding activity but undetectable intrinsic GTPase activity. This is GTP-binding protein GEM (GEM) from Pongo abelii (Sumatran orangutan).